Reading from the N-terminus, the 582-residue chain is MDSQLKKKTTFKRLLGYIKPYKAAFIAAILCMIGYSAIDTLFLSQIETLIDDGLTEQDSNILLYGALFVPFIFILRGSLNVASSYFLHWVGFKVVTKMRQQLFDHMMKLPVGFHDQHSTGDLISKITYDTQQVAEASSRAVLVLVKEGAFVAGLLGLMFYQSWQLSLVFLVIGPLVAKVVGVVSRRFRKVSSRIQTAMGNVTTTAEQMINGHKVVIMHQGQKGESTRFSEINNITRNQNMKLVNTRAISTSVIQFIASLSLSMVLVIASFPEMLGELSAGAFTTLLTAMIMLLRPLKQLTNVNSDFQRGIAAATSVFAILDEPIEVDKGSRVVDRAAGDIVFDDVTFSYQKDDEPALEHINFKVDQGKTVALVGRSGSGKSTISNLLTRFYDVEQGSILLDGHNINDYKLKCLRRQFALVSQHVTLFNDTIANNIAYGASKDVSRENIIKAAEQAYVTEFTDSMPKGLDTMVGENGVMLSGGQRQRIAIARALLQDAPILILDEATSALDTESERHIQDALGTLRKNRTAIVIAHRLSTIENADEILVMDNGEIIERGTHQQLLDQEGAYFQLHNLQFSGSA.

The next 6 membrane-spanning stretches (helical) occupy residues 23–43 (AAFI…TLFL), 61–81 (ILLY…SLNV), 140–160 (AVLV…LMFY), 163–183 (WQLS…VGVV), 247–267 (AIST…VLVI), and 273–293 (MLGE…IMLL). The ABC transmembrane type-1 domain maps to 26-308 (IAAILCMIGY…LTNVNSDFQR (283 aa)). Residues 340-576 (IVFDDVTFSY…EGAYFQLHNL (237 aa)) form the ABC transporter domain. Residue 374-381 (GRSGSGKS) participates in ATP binding.

Belongs to the ABC transporter superfamily. Lipid exporter (TC 3.A.1.106) family. Homodimer.

It localises to the cell inner membrane. The enzyme catalyses ATP + H2O + lipid A-core oligosaccharideSide 1 = ADP + phosphate + lipid A-core oligosaccharideSide 2.. Its function is as follows. Involved in lipopolysaccharide (LPS) biosynthesis. Translocates lipid A-core from the inner to the outer leaflet of the inner membrane. Transmembrane domains (TMD) form a pore in the inner membrane and the ATP-binding domain (NBD) is responsible for energy generation. The protein is ATP-dependent lipid A-core flippase of Idiomarina loihiensis (strain ATCC BAA-735 / DSM 15497 / L2-TR).